Here is a 284-residue protein sequence, read N- to C-terminus: Bifunctional protein FolD (284 aa).

Residues 166 to 168 (GAS) and Ile232 each bind NADP(+).

The protein belongs to the tetrahydrofolate dehydrogenase/cyclohydrolase family. In terms of assembly, homodimer.

It catalyses the reaction (6R)-5,10-methylene-5,6,7,8-tetrahydrofolate + NADP(+) = (6R)-5,10-methenyltetrahydrofolate + NADPH. It carries out the reaction (6R)-5,10-methenyltetrahydrofolate + H2O = (6R)-10-formyltetrahydrofolate + H(+). It participates in one-carbon metabolism; tetrahydrofolate interconversion. Catalyzes the oxidation of 5,10-methylenetetrahydrofolate to 5,10-methenyltetrahydrofolate and then the hydrolysis of 5,10-methenyltetrahydrofolate to 10-formyltetrahydrofolate. In Pseudomonas fluorescens (strain Pf0-1), this protein is Bifunctional protein FolD.